An 879-amino-acid chain; its full sequence is MSDVFNSPQARSTISAAFGIKPTAGQDVEELLIPKVWVPPEDPLASPSRLAKFLRENGYKVLQPRSLPENEEYETDQILPDLAWMRQIEGAVLKPTLSLPIGDQEYFPKYYPTHRPSKEKPNAYPPDIALLKQMIYLFLQVPEANEGLKDEVTLLTQNIRDKAYGSGTYMGQANRLVAMKEVATGRNPNKDPLKLGYTFESIAQLLDITLPVGPPGEDDKPWVPLTRVPSRMLVLTGDVDGDFEVEDYLPKINLKSSSGLPYVGRTKGETIGEMIAISNQFLRELSTLLKQGAGTKGSNKKKLLSMLSDYWYLSCGLLFPKAERYDKSTWLTKTRNIWSAPSPTHLMISMITWPVMSNSPNNVLNIEGCPSLYKFNPFRGGLNRIVEWILAPEEPKALVYADNIYIVHSNTWYSIDLEKGEANCTRQHMQAAMYYILTRGWSDNGDPMFNQTWATFAMNIAPALVVDSSCLIMNLQIKTYGQGSGNAATFINNHLLSTLVLDQWNLMRQPRPDSEEFKSIEDKLGINFKIERSIDDIRGKLRQLVLLAQPGYLSGGVEPEQSSPTVELDLLGWSATYSKDLGIYVPVLDKERLFCSAAYPKGVENKSLKSKVGIEQAYKVVRYEALRLVGGWNYPLLNKACKNNAGAARRHLEAKGFPLDEFLAEWSELSEFGEAFEGFNIKLTVTSESLAELNKPVPPKPPNVNRPVNTGGLKAVSNALKTGRYRNEAGLSGLVLLATARSRLQDAVKAKAEAEKLHKSKPDDPDADWFERSETLSDLLEKADIASKVAHSALVETSDALEAVQSTSVYTPKYPEVKNPQTASNPVVGLHLPAKRATGVQAALLGAGTSRPMGMEAPTRSKNAVKMAKRRQRQKESRQ.

A GTP-binding site is contributed by 259–266 (GLPYVGRT). The RdRp catalytic domain maps to 398–598 (LVYADNIYIV…DKERLFCSAA (201 aa)). Positions 846–879 (GAGTSRPMGMEAPTRSKNAVKMAKRRQRQKESRQ) are disordered.

Interacts with VP3 in the cytoplasm. In terms of processing, may exist in multiple phosphorylated forms.

It is found in the virion. It catalyses the reaction RNA(n) + a ribonucleoside 5'-triphosphate = RNA(n+1) + diphosphate. In terms of biological role, RNA-dependent RNA polymerase which is found both free and covalently attached to the genomic RNA. May also contain guanylyl and methyl transferase activities. This chain is RNA-directed RNA polymerase (VP1), found in Gallus gallus (Chicken).